We begin with the raw amino-acid sequence, 402 residues long: 26S proteasome regulatory subunit 8 (402 aa).

186–193 (GPPGTGKT) contributes to the ATP binding site.

The protein belongs to the AAA ATPase family.

It is found in the cytoplasm. It localises to the nucleus. In terms of biological role, the 26S proteasome is involved in the ATP-dependent degradation of ubiquitinated proteins. The regulatory (or ATPase) complex confers ATP dependency and substrate specificity to the 26S complex. In Manduca sexta (Tobacco hawkmoth), this protein is 26S proteasome regulatory subunit 8.